A 34-amino-acid chain; its full sequence is Photosystem II reaction center protein M (34 aa).

A helical transmembrane segment spans residues 5-25 (ILAFIATALFILIPTAFLLII).

The protein belongs to the PsbM family. As to quaternary structure, PSII is composed of 1 copy each of membrane proteins PsbA, PsbB, PsbC, PsbD, PsbE, PsbF, PsbH, PsbI, PsbJ, PsbK, PsbL, PsbM, PsbT, PsbX, PsbY, PsbZ, Psb30/Ycf12, at least 3 peripheral proteins of the oxygen-evolving complex and a large number of cofactors. It forms dimeric complexes.

Its subcellular location is the plastid. The protein resides in the chloroplast thylakoid membrane. Functionally, one of the components of the core complex of photosystem II (PSII). PSII is a light-driven water:plastoquinone oxidoreductase that uses light energy to abstract electrons from H(2)O, generating O(2) and a proton gradient subsequently used for ATP formation. It consists of a core antenna complex that captures photons, and an electron transfer chain that converts photonic excitation into a charge separation. This subunit is found at the monomer-monomer interface. The sequence is that of Photosystem II reaction center protein M from Lolium perenne (Perennial ryegrass).